The sequence spans 1430 residues: Gag-Pol polyprotein (1430 aa).

Glycine 2 is lipidated: N-myristoyl glycine; by host. The interval 7–31 is interaction with Gp41; the sequence is VLSGGKLDAWEKIRLRPGGKKKYKL. The interaction with host CALM1 stretch occupies residues 8 to 43; the sequence is LSGGKLDAWEKIRLRPGGKKKYKLKHLVWASRELER. Residues 12–19 are interaction with host AP3D1; it reads KLDAWEKI. An interaction with membrane phosphatidylinositol 4,5-bisphosphate and RNA region spans residues 14 to 33; the sequence is DAWEKIRLRPGGKKKYKLKH. A Nuclear export signal motif is present at residues 16–22; sequence WEKIRLR. Positions 26-32 match the Nuclear localization signal motif; sequence KKKYKLK. Residues 73 to 77 are interaction with membrane phosphatidylinositol 4,5-bisphosphate; sequence EEIKS. At tyrosine 128 the chain carries Phosphotyrosine; by host. The segment at 185-223 is interaction with human PPIA/CYPA and NUP153; that stretch reads NTVGGHQAAMQMLKDTINDEAAEWDRLHPVHAGPIPPGQ. Positions 273–359 are dimerization/Multimerization of capsid protein p24; sequence YSPVSILDIR…GGPSHKARIL (87 aa). 2 CCHC-type zinc fingers span residues 385–402 and 406–423; these read VKCF…NCRA and KGCW…DCTE. The disordered stretch occupies residues 439-480; that stretch reads EAREFSSEQTRANSPTSRELRVRGGDNPLSEAGDQRQGTEPS. Residues 445–455 are compositionally biased toward polar residues; it reads SEQTRANSPTS. The segment at 484-488 is dimerization of protease; that stretch reads PQITL. Positions 503–572 constitute a Peptidase A2 domain; it reads REALLDTGAD…TPVNIIGRNL (70 aa). The active-site For protease activity; shared with dimeric partner is aspartate 508. Dimerization of protease stretches follow at residues 532-538 and 571-583; these read GIGGFIK and NLLT…LNFP. Positions 626-816 constitute a Reverse transcriptase domain; the sequence is EGKISKIGPE…PPFLWMGYEL (191 aa). Residues aspartate 692, aspartate 767, and aspartate 768 each contribute to the Mg(2+) site. The interval 809 to 817 is RT 'primer grip'; the sequence is FLWMGYELH. The short motif at 980-996 is the Tryptophan repeat motif element; sequence WETWWTEYWQATWIPEW. Positions 1016–1139 constitute an RNase H type-1 domain; sequence IVGAETFYVD…VDKLVSAGIR (124 aa). Residues aspartate 1025, glutamate 1060, aspartate 1080, and aspartate 1131 each contribute to the Mg(2+) site. Residues 1145-1186 form an Integrase-type zinc finger; that stretch reads DGIDKAQEEHEKYHNNWRAMASDFNLPPIVAKEIVASCDKCQ. Zn(2+) is bound by residues histidine 1154, histidine 1158, cysteine 1182, and cysteine 1185. The Integrase catalytic domain occupies 1196–1346; sequence VDCSPGIWQL…SAGERIVDII (151 aa). 3 residues coordinate Mg(2+): aspartate 1206, aspartate 1258, and glutamate 1294. The segment at residues 1365 to 1412 is a DNA-binding region (integrase-type); the sequence is FRVYYRDSREPIWKGPAKLLWKGEGAVVIQDNSEIKVVPRRKAKIIRD.

In terms of assembly, homotrimer; further assembles as hexamers of trimers. Interacts with gp41 (via C-terminus). Interacts with host CALM1; this interaction induces a conformational change in the Matrix protein, triggering exposure of the myristate group. Interacts with host AP3D1; this interaction allows the polyprotein trafficking to multivesicular bodies during virus assembly. Part of the pre-integration complex (PIC) which is composed of viral genome, matrix protein, Vpr and integrase. Homodimer; the homodimer further multimerizes as homohexamers or homopentamers. Interacts with human PPIA/CYPA; This interaction stabilizes the capsid. Interacts with human NUP153. Interacts with host PDZD8; this interaction stabilizes the capsid. Interacts with monkey TRIM5; this interaction destabilizes the capsid. As to quaternary structure, homodimer, whose active site consists of two apposed aspartic acid residues. In terms of assembly, heterodimer of p66 RT and p51 RT (RT p66/p51). Heterodimerization of RT is essential for DNA polymerase activity. The overall folding of the subdomains is similar in p66 RT and p51 RT but the spatial arrangements of the subdomains are dramatically different. Homotetramer; may further associate as a homohexadecamer. Part of the pre-integration complex (PIC) which is composed of viral genome, matrix protein, Vpr and integrase. Interacts with human SMARCB1/INI1 and human PSIP1/LEDGF isoform 1. Interacts with human KPNA3; this interaction might play a role in nuclear import of the pre-integration complex. Interacts with human NUP153; this interaction might play a role in nuclear import of the pre-integration complex. Mg(2+) serves as cofactor. Post-translationally, specific enzymatic cleavages by the viral protease yield mature proteins. The protease is released by autocatalytic cleavage. The polyprotein is cleaved during and after budding, this process is termed maturation. Proteolytic cleavage of p66 RT removes the RNase H domain to yield the p51 RT subunit. Nucleocapsid protein p7 might be further cleaved after virus entry. Tyrosine phosphorylated presumably in the virion by a host kinase. Phosphorylation is apparently not a major regulator of membrane association. In terms of processing, phosphorylated possibly by host MAPK1; this phosphorylation is necessary for Pin1-mediated virion uncoating. Post-translationally, methylated by host PRMT6, impairing its function by reducing RNA annealing and the initiation of reverse transcription.

It localises to the host cell membrane. The protein localises to the host endosome. It is found in the host multivesicular body. Its subcellular location is the virion membrane. The protein resides in the host nucleus. It localises to the host cytoplasm. The protein localises to the virion. The enzyme catalyses Specific for a P1 residue that is hydrophobic, and P1' variable, but often Pro.. It carries out the reaction Endohydrolysis of RNA in RNA/DNA hybrids. Three different cleavage modes: 1. sequence-specific internal cleavage of RNA. Human immunodeficiency virus type 1 and Moloney murine leukemia virus enzymes prefer to cleave the RNA strand one nucleotide away from the RNA-DNA junction. 2. RNA 5'-end directed cleavage 13-19 nucleotides from the RNA end. 3. DNA 3'-end directed cleavage 15-20 nucleotides away from the primer terminus.. The catalysed reaction is 3'-end directed exonucleolytic cleavage of viral RNA-DNA hybrid.. It catalyses the reaction DNA(n) + a 2'-deoxyribonucleoside 5'-triphosphate = DNA(n+1) + diphosphate. Its activity is regulated as follows. Protease: The viral protease is inhibited by many synthetic protease inhibitors (PIs), such as amprenavir, atazanavir, indinavir, loprinavir, nelfinavir, ritonavir and saquinavir. Use of protease inhibitors in tritherapy regimens permit more ambitious therapeutic strategies. Reverse transcriptase/ribonuclease H: RT can be inhibited either by nucleoside RT inhibitors (NRTIs) or by non nucleoside RT inhibitors (NNRTIs). NRTIs act as chain terminators, whereas NNRTIs inhibit DNA polymerization by binding a small hydrophobic pocket near the RT active site and inducing an allosteric change in this region. Classical NRTIs are abacavir, adefovir (PMEA), didanosine (ddI), lamivudine (3TC), stavudine (d4T), tenofovir (PMPA), zalcitabine (ddC), and zidovudine (AZT). Classical NNRTIs are atevirdine (BHAP U-87201E), delavirdine, efavirenz (DMP-266), emivirine (I-EBU), and nevirapine (BI-RG-587). The tritherapies used as a basic effective treatment of AIDS associate two NRTIs and one NNRTI. Functionally, mediates, with Gag polyprotein, the essential events in virion assembly, including binding the plasma membrane, making the protein-protein interactions necessary to create spherical particles, recruiting the viral Env proteins, and packaging the genomic RNA via direct interactions with the RNA packaging sequence (Psi). Gag-Pol polyprotein may regulate its own translation, by the binding genomic RNA in the 5'-UTR. At low concentration, the polyprotein would promote translation, whereas at high concentration, the polyprotein would encapsidate genomic RNA and then shut off translation. In terms of biological role, targets the polyprotein to the plasma membrane via a multipartite membrane-binding signal, that includes its myristoylated N-terminus. Matrix protein is part of the pre-integration complex. Implicated in the release from host cell mediated by Vpu. Binds to RNA. Forms the conical core that encapsulates the genomic RNA-nucleocapsid complex in the virion. Most core are conical, with only 7% tubular. The core is constituted by capsid protein hexamer subunits. The core is disassembled soon after virion entry. Host restriction factors such as TRIM5-alpha or TRIMCyp bind retroviral capsids and cause premature capsid disassembly, leading to blocks in reverse transcription. Capsid restriction by TRIM5 is one of the factors which restricts HIV-1 to the human species. Host PIN1 apparently facilitates the virion uncoating. On the other hand, interactions with PDZD8 or CYPA stabilize the capsid. Its function is as follows. Encapsulates and protects viral dimeric unspliced genomic RNA (gRNA). Binds these RNAs through its zinc fingers. Acts as a nucleic acid chaperone which is involved in rearangement of nucleic acid secondary structure during gRNA retrotranscription. Also facilitates template switch leading to recombination. As part of the polyprotein, participates in gRNA dimerization, packaging, tRNA incorporation and virion assembly. Functionally, aspartyl protease that mediates proteolytic cleavages of Gag and Gag-Pol polyproteins during or shortly after the release of the virion from the plasma membrane. Cleavages take place as an ordered, step-wise cascade to yield mature proteins. This process is called maturation. Displays maximal activity during the budding process just prior to particle release from the cell. Also cleaves Nef and Vif, probably concomitantly with viral structural proteins on maturation of virus particles. Hydrolyzes host EIF4GI and PABP1 in order to shut off the capped cellular mRNA translation. The resulting inhibition of cellular protein synthesis serves to ensure maximal viral gene expression and to evade host immune response. Also mediates cleavage of host YTHDF3. Mediates cleavage of host CARD8, thereby activating the CARD8 inflammasome, leading to the clearance of latent HIV-1 in patient CD4(+) T-cells after viral reactivation; in contrast, HIV-1 can evade CARD8-sensing when its protease remains inactive in infected cells prior to viral budding. In terms of biological role, multifunctional enzyme that converts the viral RNA genome into dsDNA in the cytoplasm, shortly after virus entry into the cell. This enzyme displays a DNA polymerase activity that can copy either DNA or RNA templates, and a ribonuclease H (RNase H) activity that cleaves the RNA strand of RNA-DNA heteroduplexes in a partially processive 3' to 5' endonucleasic mode. Conversion of viral genomic RNA into dsDNA requires many steps. A tRNA(3)-Lys binds to the primer-binding site (PBS) situated at the 5'-end of the viral RNA. RT uses the 3' end of the tRNA primer to perform a short round of RNA-dependent minus-strand DNA synthesis. The reading proceeds through the U5 region and ends after the repeated (R) region which is present at both ends of viral RNA. The portion of the RNA-DNA heteroduplex is digested by the RNase H, resulting in a ssDNA product attached to the tRNA primer. This ssDNA/tRNA hybridizes with the identical R region situated at the 3' end of viral RNA. This template exchange, known as minus-strand DNA strong stop transfer, can be either intra- or intermolecular. RT uses the 3' end of this newly synthesized short ssDNA to perform the RNA-dependent minus-strand DNA synthesis of the whole template. RNase H digests the RNA template except for two polypurine tracts (PPTs) situated at the 5'-end and near the center of the genome. It is not clear if both polymerase and RNase H activities are simultaneous. RNase H probably can proceed both in a polymerase-dependent (RNA cut into small fragments by the same RT performing DNA synthesis) and a polymerase-independent mode (cleavage of remaining RNA fragments by free RTs). Secondly, RT performs DNA-directed plus-strand DNA synthesis using the PPTs that have not been removed by RNase H as primers. PPTs and tRNA primers are then removed by RNase H. The 3' and 5' ssDNA PBS regions hybridize to form a circular dsDNA intermediate. Strand displacement synthesis by RT to the PBS and PPT ends produces a blunt ended, linear dsDNA copy of the viral genome that includes long terminal repeats (LTRs) at both ends. Catalyzes viral DNA integration into the host chromosome, by performing a series of DNA cutting and joining reactions. This enzyme activity takes place after virion entry into a cell and reverse transcription of the RNA genome in dsDNA. The first step in the integration process is 3' processing. This step requires a complex comprising the viral genome, matrix protein, Vpr and integrase. This complex is called the pre-integration complex (PIC). The integrase protein removes 2 nucleotides from each 3' end of the viral DNA, leaving recessed CA OH's at the 3' ends. In the second step, the PIC enters cell nucleus. This process is mediated through integrase and Vpr proteins, and allows the virus to infect a non dividing cell. This ability to enter the nucleus is specific of lentiviruses, other retroviruses cannot and rely on cell division to access cell chromosomes. In the third step, termed strand transfer, the integrase protein joins the previously processed 3' ends to the 5' ends of strands of target cellular DNA at the site of integration. The 5'-ends are produced by integrase-catalyzed staggered cuts, 5 bp apart. A Y-shaped, gapped, recombination intermediate results, with the 5'-ends of the viral DNA strands and the 3' ends of target DNA strands remaining unjoined, flanking a gap of 5 bp. The last step is viral DNA integration into host chromosome. This involves host DNA repair synthesis in which the 5 bp gaps between the unjoined strands are filled in and then ligated. Since this process occurs at both cuts flanking the HIV genome, a 5 bp duplication of host DNA is produced at the ends of HIV-1 integration. Alternatively, Integrase may catalyze the excision of viral DNA just after strand transfer, this is termed disintegration. In Homo sapiens (Human), this protein is Gag-Pol polyprotein (gag-pol).